Consider the following 402-residue polypeptide: Major outer membrane porin (402 aa).

Positions 1 to 22 (MKKLLKSALLFAATGSALSLQA) are cleaved as a signal peptide.

The protein belongs to the chlamydial porin (CP) (TC 1.B.2) family. Part of a disulfide cross-linked outer membrane complex (COMC) composed of the major outer membrane porin (MOMP), the small cysteine-rich protein (OmcA) and the large cysteine-rich periplasmic protein (OmcB).

The protein localises to the cell outer membrane. In terms of biological role, in elementary bodies (EBs, the infectious stage, which is able to survive outside the host cell) provides the structural integrity of the outer envelope through disulfide cross-links with the small cysteine-rich protein and the large cysteine-rich periplasmic protein. It has been described in publications as the Sarkosyl-insoluble COMC (Chlamydia outer membrane complex), and serves as the functional equivalent of peptidoglycan. It is present but some of the disulfide bonds are reduced in reticulate bodies (RBs). Functionally, permits diffusion of specific solutes through the outer membrane. The protein is Major outer membrane porin (ompA) of Chlamydophila psittaci (strain ATCC VR-125 / 6BC) (Chlamydia psittaci).